The chain runs to 383 residues: Gap junction alpha-1 protein (383 aa).

Residues 2 to 23 (GDWSALGKLLDKVQAYSTAGGK) lie on the Cytoplasmic side of the membrane. Ser5 is modified (phosphoserine). The chain crosses the membrane as a helical span at residues 24–44 (VWLSVLFIFRILLLGTAVESA). Residues 45-76 (WGDEQSAFRCNTQQPGCENVCYDKSFPISHVR) lie on the Extracellular side of the membrane. Disulfide bonds link Cys54–Cys193 and Cys188–Cys199. The helical transmembrane segment at 77–97 (FWVLQIIFVSVPTLLYLAHVF) threads the bilayer. The Cytoplasmic segment spans residues 98–156 (YVMRKEEKLNKKEEELKVVAQTDGANVDMHLKQIEIKKFKYGIEEHGKVKMRGGLLRTY). Lys145 participates in a covalent cross-link: Glycyl lysine isopeptide (Lys-Gly) (interchain with G-Cter in SUMO). Residues 157–177 (IISILFKSVFEVAFLLIQWYI) form a helical membrane-spanning segment. Residues 178–208 (YGFSLSAVYTCKRDPCPHQVDCFLSRPTEKT) lie on the Extracellular side of the membrane. The chain crosses the membrane as a helical span at residues 209–229 (IFIIFMLVVSLVSLALNIIEL). The Cytoplasmic segment spans residues 230–383 (FYVFFKGVKD…SRPRPDDLEI (154 aa)). A Glycyl lysine isopeptide (Lys-Gly) (interchain with G-Cter in SUMO) cross-link involves residue Lys238. An interaction with NOV region spans residues 245–383 (SDPYHTTTGP…SRPRPDDLEI (139 aa)). A Phosphotyrosine modification is found at Tyr248. A phosphoserine mark is found at Ser256, Ser258, and Ser263. The interaction with UBQLN4 stretch occupies residues 265–383 (KYAYFNGCSS…SRPRPDDLEI (119 aa)). S-nitrosocysteine is present on Cys272. At Thr276 the chain carries Phosphothreonine. Phosphoserine occurs at positions 307 and 315. Residues 318-333 (QNRMGQAGSTISNSHA) are compositionally biased toward polar residues. The segment at 318-383 (QNRMGQAGST…SRPRPDDLEI (66 aa)) is disordered. Ser326 carries the phosphoserine; by CK1 modification. Thr327 is modified (phosphothreonine). A phosphoserine; by CK1 mark is found at Ser329 and Ser331. Over residues 339–352 (PDDHQNSKKLDAGH) the composition is skewed to basic and acidic residues. Residues Ser345 and Ser366 each carry the phosphoserine modification. A compositionally biased stretch (low complexity) spans 363–375 (RPSSRASSRASSR). Phosphoserine; by PKC/PRKCG and PKC/PRKCD is present on Ser369. Residues Ser370 and Ser374 each carry the phosphoserine modification.

Belongs to the connexin family. Alpha-type (group II) subfamily. In terms of assembly, a connexon is composed of a hexamer of connexins. Interacts with SGSM3. Interacts with RIC1/CIP150. Interacts with CNST and CSNK1D. Interacts (via C-terminus) with TJP1. Interacts (via C-terminus) with SRC (via SH3 domain). Interacts (not ubiquitinated) with UBQLN4 (via UBA domain). Interacts with NOV. Interacts with TMEM65. Interacts with ANK3/ANKG and PKP2. Post-translationally, phosphorylation at Ser-326, Ser-329 and Ser-331 by CK1 modulates gap junction assembly. Phosphorylated at Ser-369 by PRKCG; phosphorylation induces disassembly of gap junction plaques and inhibition of gap junction activity. Phosphorylation at Ser-369 by PRKCD triggers its internalization into small vesicles leading to proteasome-mediated degradation. Sumoylated with SUMO1, SUMO2 and SUMO3, which may regulate the level of functional Cx43 gap junctions at the plasma membrane. May be desumoylated by SENP1 or SENP2. In terms of processing, acetylated in the developing cortex; leading to delocalization from the cell membrane.

It is found in the cell membrane. It localises to the cell junction. The protein resides in the gap junction. Its subcellular location is the endoplasmic reticulum. Its function is as follows. Gap junction protein that acts as a regulator of bladder capacity. A gap junction consists of a cluster of closely packed pairs of transmembrane channels, the connexons, through which materials of low MW diffuse from one cell to a neighboring cell. May play a critical role in the physiology of hearing by participating in the recycling of potassium to the cochlear endolymph. Negative regulator of bladder functional capacity: acts by enhancing intercellular electrical and chemical transmission, thus sensitizing bladder muscles to cholinergic neural stimuli and causing them to contract. May play a role in cell growth inhibition through the regulation of NOV expression and localization. Plays an essential role in gap junction communication in the ventricles. The polypeptide is Gap junction alpha-1 protein (GJA1) (Bos taurus (Bovine)).